Consider the following 284-residue polypeptide: WUSCHEL-related homeobox 10 (284 aa).

The interval Met1–Arg43 is disordered. The homeobox; WUS-type DNA-binding region spans Pro39 to Ala103.

It belongs to the WUS homeobox family.

It is found in the nucleus. Its function is as follows. Transcription factor which may be involved in developmental processes. This Oryza sativa subsp. japonica (Rice) protein is WUSCHEL-related homeobox 10 (WOX10).